Here is a 476-residue protein sequence, read N- to C-terminus: Aspartyl/glutamyl-tRNA(Asn/Gln) amidotransferase subunit B (476 aa).

Belongs to the GatB/GatE family. GatB subfamily. In terms of assembly, heterotrimer of A, B and C subunits.

The catalysed reaction is L-glutamyl-tRNA(Gln) + L-glutamine + ATP + H2O = L-glutaminyl-tRNA(Gln) + L-glutamate + ADP + phosphate + H(+). It carries out the reaction L-aspartyl-tRNA(Asn) + L-glutamine + ATP + H2O = L-asparaginyl-tRNA(Asn) + L-glutamate + ADP + phosphate + 2 H(+). In terms of biological role, allows the formation of correctly charged Asn-tRNA(Asn) or Gln-tRNA(Gln) through the transamidation of misacylated Asp-tRNA(Asn) or Glu-tRNA(Gln) in organisms which lack either or both of asparaginyl-tRNA or glutaminyl-tRNA synthetases. The reaction takes place in the presence of glutamine and ATP through an activated phospho-Asp-tRNA(Asn) or phospho-Glu-tRNA(Gln). The polypeptide is Aspartyl/glutamyl-tRNA(Asn/Gln) amidotransferase subunit B (Geobacillus kaustophilus (strain HTA426)).